The following is a 947-amino-acid chain: Zinc finger CCCH domain-containing protein 18 (947 aa).

The residue at position 1 (methionine 1) is an N-acetylmethionine. Disordered regions lie at residues 1–218 (MDVA…PRPT), 275–295 (GGPVVDEILPPPPPEPPTESA), and 387–921 (YTEA…TLSR). Phosphoserine is present on residues serine 6, serine 32, serine 44, serine 57, serine 63, serine 70, serine 74, serine 79, and serine 91. A compositionally biased stretch (basic and acidic residues) spans 73 to 85 (KSQDQDSEAHELS). Positions 94–104 (EEGDDAEEDGT) are enriched in acidic residues. Threonine 104 is modified (phosphothreonine). Phosphoserine occurs at positions 105 and 113. The segment covering 105–119 (SDLRDEASSVTRELD) has biased composition (basic and acidic residues). Composition is skewed to acidic residues over residues 120–131 (EHELDYDEEVPE) and 138–153 (QEEEAEKAGAEEEEEK). The segment covering 160–185 (EEGKPDVQSVGEKEPTEAAKEKKKED) has biased composition (basic and acidic residues). Position 168 is a phosphoserine (serine 168). Residues 186–202 (DDGEIDDGEIDDDDLEE) show a composition bias toward acidic residues. The segment covering 203–212 (GEVKDPSDRK) has biased composition (basic and acidic residues). The C3H1-type zinc-finger motif lies at 214-240 (RPRPTCRFFMKGNCTWGMNCRFIHPGV). A compositionally biased stretch (basic and acidic residues) spans 391-479 (EPYHNYRDRE…DRDKDKEKPK (89 aa)). Residue serine 482 is modified to Phosphoserine. A Glycyl lysine isopeptide (Lys-Gly) (interchain with G-Cter in SUMO2) cross-link involves residue lysine 505. A compositionally biased stretch (basic and acidic residues) spans 505 to 515 (KRADEWKDPWR). 3 positions are modified to phosphoserine: serine 527, serine 529, and serine 531. Positions 540–601 (SASSASASNS…SRSRSFSSSP (62 aa)) are enriched in low complexity. Residues 602 to 611 (SPSPTPSPHR) are compositionally biased toward pro residues. Residues lysine 617 and lysine 656 each participate in a glycyl lysine isopeptide (Lys-Gly) (interchain with G-Cter in SUMO2) cross-link. Over residues 656 to 665 (KPGDLREARR) the composition is skewed to basic and acidic residues. Composition is skewed to low complexity over residues 687–720 (GSSYSGSSSRSRSLSVSSVSSVSSATSSSSSVHS) and 731–745 (ASPVSSASSRSPTPA). A compositionally biased stretch (basic and acidic residues) spans 755-769 (KKEDGVREEKRKRDP). Low complexity predominate over residues 773–804 (PPKSSKAPAGGKASQQAAAPQQAAPGQPQQGS). Lysine 809 is modified (N6-acetyllysine). Lysine 812 participates in a covalent cross-link: Glycyl lysine isopeptide (Lys-Gly) (interchain with G-Cter in SUMO2). The segment covering 819–836 (AAEKGSRKRYEPSDKDRQ) has biased composition (basic and acidic residues). Residues serine 837, serine 846, serine 862, serine 887, and serine 890 each carry the phosphoserine modification. Residues 887-918 (SPQSKSSSKVTSVPGKATDTATAGTKSGKAST) are compositionally biased toward low complexity. Residue lysine 902 forms a Glycyl lysine isopeptide (Lys-Gly) (interchain with G-Cter in SUMO2) linkage. Residues 915 to 944 (KASTLSRREELLKQLKAVEDAIARKRAKIP) are a coiled coil.

As to quaternary structure, interacts with ZFC3H1 in a RNase-insensitive manner.

Its subcellular location is the nucleus. This is Zinc finger CCCH domain-containing protein 18 (Zc3h18) from Rattus norvegicus (Rat).